The primary structure comprises 75 residues: Putative membrane protein insertion efficiency factor (75 aa).

It belongs to the UPF0161 family.

The protein resides in the cell membrane. Functionally, could be involved in insertion of integral membrane proteins into the membrane. The polypeptide is Putative membrane protein insertion efficiency factor (ytjA) (Bacillus subtilis (strain 168)).